A 550-amino-acid polypeptide reads, in one-letter code: Membrane-bound alkaline phosphatase (550 aa).

Residues 1 to 39 form the signal peptide; the sequence is MSTWWLVVVAAAAAAGLVRAEDRYHPERLAAGEASAATR. Asp83 provides a ligand contact to Mg(2+). Asp83 is a Zn(2+) binding site. Residue Ser133 is the Phosphoserine intermediate of the active site. Residues His196, Ser198, and Glu356 each coordinate Mg(2+). Positions 361, 365, 402, 403, and 479 each coordinate Zn(2+). Ser524 carries the GPI-anchor amidated serine lipid modification. The propeptide at 525–550 is removed in mature form; sequence AATVPTAALLSLLLAAFITLRHQCFL.

It belongs to the alkaline phosphatase family. The cofactor is Mg(2+). Requires Zn(2+) as cofactor. As to expression, midgut.

The protein resides in the cell membrane. The catalysed reaction is a phosphate monoester + H2O = an alcohol + phosphate. In Bombyx mori (Silk moth), this protein is Membrane-bound alkaline phosphatase (Alp-m).